Here is a 491-residue protein sequence, read N- to C-terminus: MLLLWFGFFSFVCGLVIYRLQFHPLSKFPGPKLAALTSLYEFYYNVVLGGRYLWEIERMHEQYGPIVRITPHELHVADPNFYTEIYAGPTRRRDKDPRLVRLAGQPTSMFATVDHGLHSSRRAILNNYFSKRSIAGLEDMIQGKVQKLVKRLNIACDQGTVVQLDAASSALTADIISEYAHGVSLDYLDDVNFNNEVADSILSLASVVHVLKFFPFLLDLSKFIPDKVLENLWSHAANILRLQKLVRAQADVALQNGGKVNGQATMFGALCDPSLPAQERTLDRLQDEGFSLIGGGTETTTGTLKVIMFHLLNEKALLRKLRKELEESPSGTWAELEKLPYMRGVMNEGLRLSGVITRLPRRAPDEALRYKQWTIPPNSLMSTSSHFVHTNSDLFPDPLVFDPERWIRAEAAGQRLEHMIVTFSKGSRQCMGNHLALAELYLVISTLVREFDMDLYGVTADNIVTHREYGFGVPKERGGGLRVSISRVRTP.

A helical transmembrane segment spans residues 2 to 22 (LLLWFGFFSFVCGLVIYRLQF). Residue cysteine 430 participates in heme binding.

The protein belongs to the cytochrome P450 family. The cofactor is heme.

It localises to the membrane. The protein operates within secondary metabolite biosynthesis; terpenoid biosynthesis. Its function is as follows. Cytochrome P450 monooxygenase; part of the gene cluster that mediates the biosynthesis of conidiogenone, a diterpene known to induce the conidiation. The bifunctional terpene synthase PrDS converts isopentenyl diphosphate (IPP) and dimethylallyl diphosphate (DMAPP) into deoxyconidiogenol. The C-terminal prenyltransferase (PT) domain of PrDS catalyzes formation of GGPP, whereas the N-terminal terpene cyclase (TC) domain catalyzes the cyclization of GGPP into deoxyconidiogenol. The cytochrome P450 monooxygenase PrP450 then catalyzes two rounds of oxidation to furnish conidiogenone. This is Conidiogenone synthase PchP450 from Penicillium rubens (strain ATCC 28089 / DSM 1075 / NRRL 1951 / Wisconsin 54-1255) (Penicillium chrysogenum).